A 330-amino-acid chain; its full sequence is MQSWVNKLWYQGHPLRFALWPLSLLFGFVTWLRRVLFSLGLKKAAKLPVPVIIVGNITVGGSGKTPTVIYLIELLRKHGLKPGVISRGYGVEIDGVRAVLSGDRADSVGDEPAMIVARTQVPMLVGAKRIDAANLLLSEFDVDIIISDDGLQHYQLARDIELVILDGERRLGNGMLLPAGPLREGPWRLQNVDHVIVNGGKALQGEVQMTLQPSAWLPVSTKHNAGEPPSKDSPLVAMAGIGNPQRFFDTLAQQGYQVEHTQTFDDHSAYSESVLNELASGRMLVMTEKDAVKCRDFAKDNWWYLAVDAKLSASFDQQLLAKIDRLVADK.

58–65 (TVGGSGKT) contributes to the ATP binding site.

It belongs to the LpxK family.

The catalysed reaction is a lipid A disaccharide + ATP = a lipid IVA + ADP + H(+). It participates in glycolipid biosynthesis; lipid IV(A) biosynthesis; lipid IV(A) from (3R)-3-hydroxytetradecanoyl-[acyl-carrier-protein] and UDP-N-acetyl-alpha-D-glucosamine: step 6/6. In terms of biological role, transfers the gamma-phosphate of ATP to the 4'-position of a tetraacyldisaccharide 1-phosphate intermediate (termed DS-1-P) to form tetraacyldisaccharide 1,4'-bis-phosphate (lipid IVA). This is Tetraacyldisaccharide 4'-kinase from Shewanella halifaxensis (strain HAW-EB4).